The following is a 305-amino-acid chain: Ornithine carbamoyltransferase (305 aa).

Residues 52–55 (STRT), Gln-79, Arg-103, and 130–133 (HPCQ) contribute to the carbamoyl phosphate site. L-ornithine-binding positions include Asn-161, Asp-222, and 226-227 (SM). Carbamoyl phosphate is bound by residues 262 to 263 (CL) and Arg-290.

This sequence belongs to the aspartate/ornithine carbamoyltransferase superfamily. OTCase family.

The protein resides in the cytoplasm. It catalyses the reaction carbamoyl phosphate + L-ornithine = L-citrulline + phosphate + H(+). Its pathway is amino-acid biosynthesis; L-arginine biosynthesis; L-arginine from L-ornithine and carbamoyl phosphate: step 1/3. In terms of biological role, reversibly catalyzes the transfer of the carbamoyl group from carbamoyl phosphate (CP) to the N(epsilon) atom of ornithine (ORN) to produce L-citrulline. This chain is Ornithine carbamoyltransferase, found in Pelobacter propionicus (strain DSM 2379 / NBRC 103807 / OttBd1).